The chain runs to 166 residues: Probable glucosamine 6-phosphate N-acetyltransferase 2 (166 aa).

The N-acetyltransferase domain occupies 21 to 166; the sequence is VQIRRLEATD…EKGVQMAIYF (146 aa). Residues Ser43, 93–96, and 105–107 each bind substrate; these read KFLR and EDV. 115 to 120 contributes to the acetyl-CoA binding site; sequence GRGLGL. A substrate-binding site is contributed by 136 to 137; that stretch reads YK. 150-152 contributes to the acetyl-CoA binding site; sequence YAK.

It belongs to the acetyltransferase family. GNA1 subfamily. As to quaternary structure, homodimer.

The protein resides in the endoplasmic reticulum membrane. The catalysed reaction is D-glucosamine 6-phosphate + acetyl-CoA = N-acetyl-D-glucosamine 6-phosphate + CoA + H(+). It participates in nucleotide-sugar biosynthesis; UDP-N-acetyl-alpha-D-glucosamine biosynthesis; N-acetyl-alpha-D-glucosamine 1-phosphate from alpha-D-glucosamine 6-phosphate (route I): step 1/2. Its function is as follows. Acetyltransferase involved in UDP-N-acetylglucosamine (UDP-GlcNAc) biosynthesis. UDP-GlcNAc is an essential metabolite that serves as an initial sugar donor of N-glycan synthesis and thus plays an important role in protein and lipid glycosylation. The chain is Probable glucosamine 6-phosphate N-acetyltransferase 2 from Oryza sativa subsp. japonica (Rice).